The chain runs to 433 residues: Coiled-coil domain-containing protein 71 (433 aa).

Serine 125 is modified (phosphoserine). Disordered regions lie at residues 204-256 (LKVR…GCSA), 284-310 (QTKT…KAAV), and 325-396 (KAAQ…RKSQ). Basic residues-rich tracts occupy residues 216–230 (KAPR…KHLT) and 288–306 (VRVR…RAKA). Residues 260–330 (KTVQAQASQT…QAKAKAAQTK (71 aa)) are a coiled coil.

The chain is Coiled-coil domain-containing protein 71 (Ccdc71) from Mus musculus (Mouse).